Here is a 377-residue protein sequence, read N- to C-terminus: MTSAGGFPAGAGGYQTPGGHSASPAHEAPPGGAEGLAAEVHTLERAIFEVKRIIVGQDQLVERMLVGLLSKGHVLLEGVPGVAKTLAVETFARVVGGTFSRIQFTPDLVPTDIIGTRIYRQGREEFDTELGPVVANFLLADEINRAPAKVQSALLEVMQERHVSIGGRTFPMPSPFLVMATQNPIEHEGVYPLPEAQRDRFLFKINVGYPSPEEEREIIYRMGVTPPQAKQILSTGDLLRLQEIAANNFVHHALVDYVVRVVFATRKPEQLGMNDVKSWVAFGASPRASLGIIAAARSLALVRGRDYVIPQDVIEVIPDVLRHRLVLTYDALADEISPEIVINRVLQTVALPQVNAVPQQGHSVPPVMQAAAAASGR.

The segment at 1–33 is disordered; it reads MTSAGGFPAGAGGYQTPGGHSASPAHEAPPGGA. The span at 7-16 shows a compositional bias: gly residues; that stretch reads FPAGAGGYQT. Over residues 19 to 33 the composition is skewed to low complexity; that stretch reads GHSASPAHEAPPGGA. Residue 78–85 coordinates ATP; it reads GVPGVAKT.

Belongs to the MoxR family. Interacts with RipA. Interacts with host Toll-like receptor 4 (TLR4).

Functionally, displays ATP-enhanced chaperone activity. Required for the proper folding of the peptidoglycan endopeptidase RipA and its secretion through the TAT secretion system. In vitro, prevents thermal aggregation of MalZ protein and protects the functional activity of the restriction enzyme NdeI from thermal inactivation. Its function is as follows. Could be a moonlighting protein that uses a multipronged approach to dampen host-directed immunity for efficient replication, survival and pathogenesis. Can enhance virulence by inhibiting autophagy and apoptosis, and disrupting cellular bioenergetics. Binds and activates host TLR4 on the surface of macrophage cells, leading to the activation of the host NFKB and MAPK signaling cascades and enhanced secretion of proinflammatory cytokines. Inhibits autophagic flux via activation of PI3K-AKT-MTOR-ULK1 signaling cascade and represses apoptosis via inhibiting protooncogene c-FOS and MAPK JNK1/2. Also induces robust disruption of cellular bioenergetics by metabolic reprogramming to rewire the citric acid cycle intermediates for its benefit. This chain is Chaperone MoxR1, found in Mycobacterium tuberculosis (strain ATCC 25618 / H37Rv).